The chain runs to 316 residues: Pantothenate kinase (316 aa).

ATP is bound at residue 95-102 (GSVAVGKS).

Belongs to the prokaryotic pantothenate kinase family.

The protein resides in the cytoplasm. It catalyses the reaction (R)-pantothenate + ATP = (R)-4'-phosphopantothenate + ADP + H(+). It functions in the pathway cofactor biosynthesis; coenzyme A biosynthesis; CoA from (R)-pantothenate: step 1/5. This Shewanella piezotolerans (strain WP3 / JCM 13877) protein is Pantothenate kinase.